The following is a 198-amino-acid chain: Probable GTP-binding protein EngB (198 aa).

One can recognise an EngB-type G domain in the interval 22–195 (DLPEIALAGR…WKAIHKMTKT (174 aa)). GTP-binding positions include 30-37 (GRSNVGKS), 57-61 (GKTQT), 75-78 (DVPG), 142-145 (TKAD), and 174-176 (FSS). Mg(2+)-binding residues include Ser37 and Thr59.

The protein belongs to the TRAFAC class TrmE-Era-EngA-EngB-Septin-like GTPase superfamily. EngB GTPase family. Mg(2+) serves as cofactor.

Necessary for normal cell division and for the maintenance of normal septation. The sequence is that of Probable GTP-binding protein EngB from Bacillus mycoides (strain KBAB4) (Bacillus weihenstephanensis).